The primary structure comprises 349 residues: sn-glycerol-3-phosphate import ATP-binding protein UgpC (349 aa).

The ABC transporter domain occupies 4–235 (VTLTAVRKVY…PASTFVASFM (232 aa)). 37-44 (GPSGCGKS) contacts ATP.

It belongs to the ABC transporter superfamily. sn-glycerol-3-phosphate importer (TC 3.A.1.1.3) family. As to quaternary structure, the complex is composed of two ATP-binding proteins (UgpC), two transmembrane proteins (UgpA and UgpE) and a solute-binding protein (UgpB).

The protein resides in the cell inner membrane. It catalyses the reaction sn-glycerol 3-phosphate(out) + ATP + H2O = sn-glycerol 3-phosphate(in) + ADP + phosphate + H(+). Its function is as follows. Part of the ABC transporter complex UgpBAEC involved in sn-glycerol-3-phosphate (G3P) import. Responsible for energy coupling to the transport system. This Jannaschia sp. (strain CCS1) protein is sn-glycerol-3-phosphate import ATP-binding protein UgpC.